Reading from the N-terminus, the 92-residue chain is Transcription factor PRE4 (92 aa).

Residues 5–60 (KSRSRQTGASMITDEQINDLVLQLHRLLPELANNRRSGKVSASRVLQETCSYIRNL) enclose the bHLH domain.

Belongs to the bHLH protein family. In terms of assembly, interacts with HFR1 and IBH1. In terms of tissue distribution, expressed in roots, leaves, stems and flowers.

The protein resides in the nucleus. Functionally, atypical and probable non DNA-binding bHLH transcription factor that integrates multiple signaling pathways to regulate cell elongation and plant development. Regulates light responses by binding and inhibiting the activity of the bHLH transcription factor HFR1, a critical regulator of light signaling and shade avoidance. May have a regulatory role in various aspects of gibberellin-dependent growth and development. The protein is Transcription factor PRE4 (PRE4) of Arabidopsis thaliana (Mouse-ear cress).